The chain runs to 404 residues: 5-azacytidine-induced protein 2 (404 aa).

The homodimerization stretch occupies residues 1–198; that stretch reads MDTLVEDDIC…TELQKARQTG (198 aa). A coiled-coil region spans residues 40-198; sequence ALVTAYEDIK…TELQKARQTG (159 aa). Residues 229 to 269 form an interaction with TBK1 and IKBKE region; sequence SDHMQHAYWELRREMANLHLVTRVQAELLRQLKTAAAGKAC. A Phosphoserine modification is found at serine 330. 2 disordered regions span residues 332–351 and 356–390; these read TDNERLTPNDGADFQEHNSY and LEDNSWVFPSPPKSSETAFGESKSKILPSPNLPPL. At serine 365 the chain carries Phosphoserine.

In terms of assembly, homodimer. Interacts with IKBKE, TBK1 and TICAM1. Interacts with TAX1BP1. Interacts with CALCOCO2. Post-translationally, ubiquitinated via 'Lys-48'-linked polyubiquitination by TRIM38, leading to its degradation.

The protein resides in the cytoplasm. In terms of biological role, adapter protein which binds TBK1 and IKBKE playing a role in antiviral innate immunity. Activates serine/threonine-protein kinase TBK1 and facilitates its oligomerization. Enhances the phosphorylation of NF-kappa-B p65 subunit RELA by TBK1. Promotes TBK1-induced as well as TNF-alpha or PMA-induced activation of NF-kappa-B. Participates in IFNB promoter activation via TICAM1. This chain is 5-azacytidine-induced protein 2 (Azi2), found in Rattus norvegicus (Rat).